We begin with the raw amino-acid sequence, 385 residues long: 4-hydroxy-3-methylbut-2-en-1-yl diphosphate synthase (flavodoxin) 2 (385 aa).

Positions 281, 284, 316, and 323 each coordinate [4Fe-4S] cluster.

This sequence belongs to the IspG family. It depends on [4Fe-4S] cluster as a cofactor.

The enzyme catalyses (2E)-4-hydroxy-3-methylbut-2-enyl diphosphate + oxidized [flavodoxin] + H2O + 2 H(+) = 2-C-methyl-D-erythritol 2,4-cyclic diphosphate + reduced [flavodoxin]. Its pathway is isoprenoid biosynthesis; isopentenyl diphosphate biosynthesis via DXP pathway; isopentenyl diphosphate from 1-deoxy-D-xylulose 5-phosphate: step 5/6. Functionally, converts 2C-methyl-D-erythritol 2,4-cyclodiphosphate (ME-2,4cPP) into 1-hydroxy-2-methyl-2-(E)-butenyl 4-diphosphate. This chain is 4-hydroxy-3-methylbut-2-en-1-yl diphosphate synthase (flavodoxin) 2, found in Streptomyces avermitilis (strain ATCC 31267 / DSM 46492 / JCM 5070 / NBRC 14893 / NCIMB 12804 / NRRL 8165 / MA-4680).